We begin with the raw amino-acid sequence, 283 residues long: 2-dehydro-3-deoxyphosphooctonate aldolase (283 aa).

This sequence belongs to the KdsA family.

The protein resides in the cytoplasm. It catalyses the reaction D-arabinose 5-phosphate + phosphoenolpyruvate + H2O = 3-deoxy-alpha-D-manno-2-octulosonate-8-phosphate + phosphate. It functions in the pathway carbohydrate biosynthesis; 3-deoxy-D-manno-octulosonate biosynthesis; 3-deoxy-D-manno-octulosonate from D-ribulose 5-phosphate: step 2/3. The protein operates within bacterial outer membrane biogenesis; lipopolysaccharide biosynthesis. This Prochlorococcus marinus (strain MIT 9313) protein is 2-dehydro-3-deoxyphosphooctonate aldolase.